Consider the following 451-residue polypeptide: MTKRKLHNNWIIVTTMITFVTIFLFCLIIIFFLKDTLHNSELDDAERSSSDINNLFHSKPVKDISALDLNASLGNFQEIIIYDEHNNKLFETSNDNTVRVEPGYEHRYFDRVIKKRYKGIDYLIIKEPITTQDFKGYSLLIHSLENYDNIVKSLYIIALAFGVIATIITATISYVFSTQITKPLVSLSNKMIEIRRDGFQNKLQLNTNYEEIDNLANTFNEMMSQIEESFNQQRQFVEDASHELRTPLQIIQGHLNLIQRWGKKDPAVLEESLNISIEEMNRIIKLVEELLELTKGDVNDISSEAQTVHINDEIRSRIHSLKQLHPDYQFDTDLTSKNLEIKMKPHQFEQLFLIFIDNAIKYDVKNKKIKVKTRLKNKQKIIEITDHGIGIPEEDQDFIFDRFYRVDKSRSRSQGGNGLGLSIAQKIIQLNGGSIKIKSEINKGTTFKIIF.

A run of 2 helical transmembrane segments spans residues 11–31 and 156–176; these read IIVTTMITFVTIFLFCLIIIF and IIALAFGVIATIITATISYVF. Residues 178–231 form the HAMP domain; it reads TQITKPLVSLSNKMIEIRRDGFQNKLQLNTNYEEIDNLANTFNEMMSQIEESFN. The Histidine kinase domain maps to 239–451; sequence DASHELRTPL…NKGTTFKIIF (213 aa). Histidine 242 bears the Phosphohistidine; by autocatalysis mark.

Autophosphorylated.

It is found in the cell membrane. It catalyses the reaction ATP + protein L-histidine = ADP + protein N-phospho-L-histidine.. Functionally, member of the two-component regulatory system ArlS/ArlR involved in the regulation of adhesion, autolysis, multidrug resistance and virulence. ArlS probably functions as a sensor protein kinase which is autophosphorylated at a histidine residue and transfers its phosphate group to ArlR. In Staphylococcus aureus (strain bovine RF122 / ET3-1), this protein is Signal transduction histidine-protein kinase ArlS (arlS).